Consider the following 254-residue polypeptide: Aspartate/glutamate leucyltransferase (254 aa).

The protein belongs to the R-transferase family. Bpt subfamily.

The protein localises to the cytoplasm. It catalyses the reaction N-terminal L-glutamyl-[protein] + L-leucyl-tRNA(Leu) = N-terminal L-leucyl-L-glutamyl-[protein] + tRNA(Leu) + H(+). It carries out the reaction N-terminal L-aspartyl-[protein] + L-leucyl-tRNA(Leu) = N-terminal L-leucyl-L-aspartyl-[protein] + tRNA(Leu) + H(+). Functions in the N-end rule pathway of protein degradation where it conjugates Leu from its aminoacyl-tRNA to the N-termini of proteins containing an N-terminal aspartate or glutamate. The sequence is that of Aspartate/glutamate leucyltransferase from Xylella fastidiosa (strain M12).